Consider the following 623-residue polypeptide: MTEAKELLQDERFLKIQELNSAEPSKRHSVTYDNVILPQESVEVSPRSSTTSLEEPATTTATGVAVAAAAAAAEKKKKKKGEDGDDEQDEQAEEKYPVDPRMQKYLSHLKSKSRTRVHRKDASKYVSFFGDVSFDPRPTLLDSAVNVPFQTTFKGPVLEKQLKGLQQTKKGEVAAAAATAATAATAAAAPPGKKLESNFSGIYVFAWMFMGWIAFRSCMDYYVSHEGGFASMEIVQYMTSDLFTIALLDLALFLSTFFVVFVHWLVKLGFIRWKWTGFVAVSLFELCFIPVSFPVYVYYFHFSWVTRIFLFLHSVVLLMKAHSFAFYNGYLWDIKNELEFSSNKLNKFKESLSPETKDILQKSCDFCLFELNYQTKDNDFPNNISCSNYFMFCMFPVLVYQINYPRTSHIRWRYVLEKFCAIMGTIFLMMVTAQIFMHPVAMRCIEYHDTPSFGGWVPAVKQWLFLLFEMIPGFSVLYMLTFYMIWDALLNCVAELTRFADRYFYGDWWNCVSFEEFSRIWNVPVHKFLLRHVYHSSMGALHFSKAQATLFTFLLSAVFHEIAMFAIFKEVRGYLFLFQLSQFAWTALSNTKFLRSRPQLSNVVFTFGVCTGPSMIMTLYLTL.

A disordered region spans residues 20–99 (NSAEPSKRHS…EQAEEKYPVD (80 aa)). Over residues 57-72 (ATTTATGVAVAAAAAA) the composition is skewed to low complexity. The segment covering 83 to 92 (DGDDEQDEQA) has biased composition (acidic residues). 5 helical membrane passes run 195 to 215 (LESN…WIAF), 242 to 262 (LFTI…VVFV), 277 to 297 (GFVA…PVYV), 384 to 404 (ISCS…QINY), and 422 to 442 (IMGT…PVAM). Positions 504–510 (FYGDWWN) match the FYXDWWN motif motif. 2 consecutive transmembrane segments (helical) span residues 548 to 568 (ATLF…FAIF) and 603 to 623 (VVFT…YLTL). Histidine 560 is a catalytic residue.

This sequence belongs to the membrane-bound acyltransferase family. Sterol o-acyltransferase subfamily.

It is found in the endoplasmic reticulum membrane. Functionally, sterol O-acyltransferase that catalyzes the formation of stery esters. In Saccharomyces uvarum (strain ATCC 76518 / CBS 7001 / CLIB 283 / NBRC 10550 / MCYC 623 / NCYC 2669 / NRRL Y-11845) (Yeast), this protein is Sterol O-acyltransferase 1 (ARE1).